A 554-amino-acid polypeptide reads, in one-letter code: 3-(3-hydroxy-phenyl)propionate/3-hydroxycinnamic acid hydroxylase (554 aa).

FAD contacts are provided by residues 17–46 (QVAI…VVEK) and 285–295 (FRIDRVLLAGD).

The protein belongs to the PheA/TfdB FAD monooxygenase family. Requires FAD as cofactor.

It carries out the reaction 3-(3-hydroxyphenyl)propanoate + NADH + O2 + H(+) = 3-(2,3-dihydroxyphenyl)propanoate + NAD(+) + H2O. The enzyme catalyses (2E)-3-(3-hydroxyphenyl)prop-2-enoate + NADH + O2 + H(+) = (2E)-3-(2,3-dihydroxyphenyl)prop-2-enoate + NAD(+) + H2O. The protein operates within aromatic compound metabolism; 3-phenylpropanoate degradation. Functionally, catalyzes the insertion of one atom of molecular oxygen into position 2 of the phenyl ring of 3-(3-hydroxyphenyl)propionate (3-HPP) and hydroxycinnamic acid (3HCI). The chain is 3-(3-hydroxy-phenyl)propionate/3-hydroxycinnamic acid hydroxylase from Escherichia coli O157:H7.